We begin with the raw amino-acid sequence, 256 residues long: Imidazole glycerol phosphate synthase subunit HisF (256 aa).

Active-site residues include aspartate 11 and aspartate 130.

The protein belongs to the HisA/HisF family. Heterodimer of HisH and HisF.

The protein localises to the cytoplasm. The catalysed reaction is 5-[(5-phospho-1-deoxy-D-ribulos-1-ylimino)methylamino]-1-(5-phospho-beta-D-ribosyl)imidazole-4-carboxamide + L-glutamine = D-erythro-1-(imidazol-4-yl)glycerol 3-phosphate + 5-amino-1-(5-phospho-beta-D-ribosyl)imidazole-4-carboxamide + L-glutamate + H(+). The protein operates within amino-acid biosynthesis; L-histidine biosynthesis; L-histidine from 5-phospho-alpha-D-ribose 1-diphosphate: step 5/9. In terms of biological role, IGPS catalyzes the conversion of PRFAR and glutamine to IGP, AICAR and glutamate. The HisF subunit catalyzes the cyclization activity that produces IGP and AICAR from PRFAR using the ammonia provided by the HisH subunit. The protein is Imidazole glycerol phosphate synthase subunit HisF of Prochlorococcus marinus (strain AS9601).